A 271-amino-acid polypeptide reads, in one-letter code: MLPTVFIVSDGTGITAETFAHSILSQFDQKFRLVRVPFIDSIEKAYGTVQKIDDAAQHDGRRPIVFTTLVDGESNEIVKRSNALVLDMFQRFVEPLEQELQLKSSHAMGRVHQNADTEEYKTRIEAINFSLAHDDGQSNRNLADADVILIGVSRSGKTPTSLYLAMQYGVKAANYPLIPEDFERGKLPTPLHPHRDKLFGLSIDPMRLSEIRNERRPGSKYAAPENCRYEINEAEAMMRREGVKWLSSTHKSIEEIATTILQEIKLERQSY.

Residue 151 to 158 coordinates ADP; the sequence is GVSRSGKT.

This sequence belongs to the pyruvate, phosphate/water dikinase regulatory protein family. PSRP subfamily.

It carries out the reaction [pyruvate, water dikinase] + ADP = [pyruvate, water dikinase]-phosphate + AMP + H(+). It catalyses the reaction [pyruvate, water dikinase]-phosphate + phosphate + H(+) = [pyruvate, water dikinase] + diphosphate. Functionally, bifunctional serine/threonine kinase and phosphorylase involved in the regulation of the phosphoenolpyruvate synthase (PEPS) by catalyzing its phosphorylation/dephosphorylation. The sequence is that of Putative phosphoenolpyruvate synthase regulatory protein from Burkholderia thailandensis (strain ATCC 700388 / DSM 13276 / CCUG 48851 / CIP 106301 / E264).